The sequence spans 485 residues: Pre-glycoprotein polyprotein GP complex (485 aa).

Gly-2 is lipidated: N-myristoyl glycine; by host. Residues 2-17 lie on the Extracellular side of the membrane; that stretch reads GQLISFFGEIPTILQE. Residues 18–33 form a helical membrane-spanning segment; it reads ALNIALIAVSIIATIK. The Cytoplasmic segment spans residues 34–58; it reads GVVNVWKSGLIQLLMFVMLAGRSCS. Cys-57 contributes to the Zn(2+) binding site. Topologically, residues 59 to 424 are extracellular; that stretch reads VQIGHHLELE…QGRTPLSLVD (366 aa). 4 cysteine pairs are disulfide-bonded: Cys-85-Cys-225, Cys-271-Cys-284, Cys-293-Cys-302, and Cys-356-Cys-377. 4 N-linked (GlcNAc...) asparagine; by host glycosylation sites follow: Asn-88, Asn-128, Asn-179, and Asn-218. N-linked (GlcNAc...) asparagine; by host glycans are attached at residues Asn-357, Asn-365, Asn-382, and Asn-387. The helical transmembrane segment at 425-445 threads the bilayer; it reads VCFWSTLFYTASIFLHLIRIP. At 446–485 the chain is on the cytoplasmic side; it reads THRHIVGEGCPKPHRLRADSTCACGLYKQKRRPLKWVRSN. Positions 447, 449, 455, 459, 467, and 469 each coordinate Zn(2+).

Belongs to the arenaviridae GPC protein family. As to quaternary structure, interacts with glycoprotein G2. Part of the GP complex (GP-C) together with glycoprotein G1 and glycoprotein G2. The GP-complex interacts with protein Z, which interacts with ribonucleocapsid; these interactions may induce virion budding. Homotrimer; disulfide-linked. In pre-fusion state, G1 homotrimers bind G2 homotrimers via ionic interactions. Part of the GP complex (GP-C) together with glycoprotein G2 and the stable signal peptide. The GP-complex interacts with protein Z, which interacts with ribonucleocapsid; these interactions may induce virion budding. In terms of assembly, homotrimer. Interacts with the stable signal peptide. In pre-fusion state, G2 homotrimers bind G1 homotrimers via ionic interactions. Part of the GP complex (GP-C) together with glycoprotein G1 and the stable signal peptide. Acidification in the endosome triggers rearrangements, which ultimately leads to a 6 helix bundle formed by the two heptad repeat domains (HR1 and HR2) in post-fusion state. The GP-complex interacts with protein Z, which interacts with ribonucleocapsid; these interactions may induce virion budding. In terms of processing, specific enzymatic cleavages in vivo yield mature proteins. GP-C polyprotein is cleaved in the endoplasmic reticulum by the host protease MBTPS1. Only cleaved glycoprotein is incorporated into virions. The SSP remains stably associated with the GP complex following cleavage by signal peptidase and plays crucial roles in the trafficking of GP through the secretory pathway. Post-translationally, myristoylation is necessary for GP2-mediated fusion activity.

The protein resides in the virion membrane. It localises to the host endoplasmic reticulum membrane. The protein localises to the host Golgi apparatus membrane. Its subcellular location is the host cell membrane. Its function is as follows. Functions as a cleaved signal peptide that is retained as the third component of the GP complex (GP-C). Helps to stabilize the spike complex in its native conformation. The SSP is required for efficient glycoprotein expression, post-translational maturation cleavage of G1 and G2, glycoprotein transport to the cell surface plasma membrane, formation of infectious virus particles, and acid pH-dependent glycoprotein-mediated cell fusion. In terms of biological role, forms the virion spikes together with glycoprotein G2. The glycoprotein spike trimers are connected to the underlying matrix. Interacts with the host receptor leading to virus endocytosis. Functionally, forms the virion spikes together with glycoprotein G1. The glycoprotein spike trimers are connected to the underlying matrix. Class I viral fusion protein that directs fusion of viral and host endosomal membranes, leading to delivery of the nucleocapsid into the cytoplasm. Membrane fusion is mediated by irreversible conformational changes induced by acidification. The chain is Pre-glycoprotein polyprotein GP complex from Sigmodon hispidus (Hispid cotton rat).